Reading from the N-terminus, the 391-residue chain is Nucleosome assembly protein 1-like 1 (391 aa).

Over residues 1 to 10 the composition is skewed to basic and acidic residues; that stretch reads MADIDNKEQS. The tract at residues 1–32 is disordered; sequence MADIDNKEQSELDQDLEDVEEVEEEETGEETK. A2 bears the N-acetylalanine mark. The residue at position 10 (S10) is a Phosphoserine. The span at 11 to 28 shows a compositional bias: acidic residues; the sequence is ELDQDLEDVEEVEEEETG. T62 and T64 each carry phosphothreonine. Position 69 is a phosphoserine (S69). K116 is modified (N6-acetyllysine). The short motif at 125 to 150 is the NAP1L motif element; that stretch reads YEPTEEECEWKPDEEDEVSEELKEKA. Positions 131-143 are enriched in acidic residues; that stretch reads ECEWKPDEEDEVS. Residues 131-163 form a disordered region; that stretch reads ECEWKPDEEDEVSEELKEKAKIEDEKKDEEKED. S143 carries the phosphoserine modification. A compositionally biased stretch (basic and acidic residues) spans 144-163; it reads EELKEKAKIEDEKKDEEKED. A Nuclear localization signal motif is present at residues 273 to 279; it reads IKKKQKH. Over residues 346-376 the composition is skewed to acidic residues; sequence AIEDDDDDYDEEGEEADEEGEEEGDEENDPD. A disordered region spans residues 346 to 391; sequence AIEDDDDDYDEEGEEADEEGEEEGDEENDPDYDPKKDQNPAECKQQ. 5-glutamyl polyglycine occurs at positions 359 and 360. Basic and acidic residues predominate over residues 377-391; sequence YDPKKDQNPAECKQQ. At C388 the chain carries Cysteine methyl ester. C388 is lipidated: S-farnesyl cysteine. The propeptide at 389–391 is removed in mature form; the sequence is KQQ.

Belongs to the nucleosome assembly protein (NAP) family. Homodimer. The dimer binds strongly and sequentially to single and double H2A-H2B heterodimers. Interacts with ERCC6; this interaction increases ERCC6 processivity. Interacts with RAD54. Interacts with SETD1A. Post-translationally, polyglycylated by TTLL10 on glutamate residues, resulting in polyglycine chains on the gamma-carboxyl group. Both polyglutamylation and polyglycylation modifications can coexist on the same protein on adjacent residues, and lowering polyglycylation levels increases polyglutamylation, and reciprocally. Polyglutamylated by TTLL4 on glutamate residues, resulting in polyglutamate chains on the gamma-carboxyl group. Both polyglutamylation and polyglycylation modifications can coexist on the same protein on adjacent residues, and lowering polyglycylation levels increases polyglutamylation, and reciprocally. Highly expressed in the brain (at protein level). High expression in cerebral cortex, not in cerebellar cortex.

The protein localises to the nucleus. Its subcellular location is the cytoplasm. It is found in the melanosome. Functionally, histone chaperone that plays a role in the nuclear import of H2A-H2B and nucleosome assembly. Also participates in several important DNA repair mechanisms: greatly enhances ERCC6-mediated chromatin remodeling which is essential for transcription-coupled nucleotide excision DNA repair. Also stimulates homologous recombination (HR) by RAD51 and RAD54 which is essential in mitotic DNA double strand break (DSB) repair. Plays a key role in the regulation of embryonic neurogenesis. Promotes the proliferation of neural progenitors and inhibits neuronal differentiation during cortical development. Regulates neurogenesis via the modulation of RASSF10; regulates RASSF10 expression by promoting SETD1A-mediated H3K4 methylation at the RASSF10 promoter. The polypeptide is Nucleosome assembly protein 1-like 1 (Nap1l1) (Mus musculus (Mouse)).